A 62-amino-acid chain; its full sequence is Large ribosomal subunit protein bL28 (62 aa).

The protein belongs to the bacterial ribosomal protein bL28 family.

This Streptococcus uberis (strain ATCC BAA-854 / 0140J) protein is Large ribosomal subunit protein bL28.